The chain runs to 169 residues: Transmembrane protein B169L (169 aa).

Transmembrane regions (helical) follow at residues 28 to 48 and 60 to 80; these read NPFI…FAIC and TAIY…YVLN. Residue Asn88 is glycosylated (N-linked (GlcNAc...) asparagine; by host). Residues 107–169 form a disordered region; the sequence is DEIIPPISPP…EVIMPSQYNN (63 aa). The span at 140-154 shows a compositional bias: low complexity; the sequence is KPADSKPASSADSKP.

Belongs to the asfivirus B169L family.

The protein localises to the host membrane. The protein resides in the virion. This is Transmembrane protein B169L from Ornithodoros (relapsing fever ticks).